We begin with the raw amino-acid sequence, 26 residues long: Stage V sporulation protein M (26 aa).

The segment at 3-9 (FYTIKLP) is important for localization.

Interacts with SpoIVA. May interact with the ATP-dependent protease FtsH.

The protein localises to the forespore outer membrane. In terms of biological role, coordinates cortex and coat assembly during sporulation. Associates with the spore coat protein SpoIVA and with the outer forespore membrane, thereby serving as a membrane anchor that tethers SpoIVA and the entire spore coat to the forespore surface. May also serve as a competitive inhibitor of FtsH activity during sporulation. The sequence is that of Stage V sporulation protein M from Bacillus subtilis (strain 168).